The primary structure comprises 294 residues: Type I ribosome-inactivating protein trichoanguina (294 aa).

Positions 1–19 (MALSFFFLAISLGSPTAIG) are cleaved as a signal peptide. An N-linked (GlcNAc...) asparagine glycan is attached at asparagine 70. Residues glutamate 177 and arginine 180 contribute to the active site. N-linked (GlcNAc...) asparagine glycosylation occurs at asparagine 220. Residues 265-294 (VGSEYDIPTTILHPGAMGMLHNQNGNYVTM) constitute a propeptide that is removed on maturation.

Belongs to the ribosome-inactivating protein family. Type 1 RIP subfamily.

It carries out the reaction Endohydrolysis of the N-glycosidic bond at one specific adenosine on the 28S rRNA.. Inhibits protein synthesis by depurinating 28S rRNA in ribosomes. In Trichosanthes anguina (Snake gourd), this protein is Type I ribosome-inactivating protein trichoanguina (TCA).